The chain runs to 235 residues: tRNA pseudouridine synthase B (235 aa).

D45 functions as the Nucleophile in the catalytic mechanism.

This sequence belongs to the pseudouridine synthase TruB family. Type 1 subfamily.

It carries out the reaction uridine(55) in tRNA = pseudouridine(55) in tRNA. In terms of biological role, responsible for synthesis of pseudouridine from uracil-55 in the psi GC loop of transfer RNAs. This Chlamydia pneumoniae (Chlamydophila pneumoniae) protein is tRNA pseudouridine synthase B.